The following is a 340-amino-acid chain: L-galactonate-5-dehydrogenase (340 aa).

7 residues coordinate Zn(2+): Cys40, Cys65, Cys92, Cys95, Cys98, Cys106, and Glu146.

The protein belongs to the zinc-containing alcohol dehydrogenase family. It depends on Zn(2+) as a cofactor.

It catalyses the reaction L-galactonate + NAD(+) = keto-D-tagaturonate + NADH + H(+). With respect to regulation, inhibited by EDTA. Its function is as follows. Catalyzes the oxidation of L-galactonate to D-tagaturonate. Required for growth on L-galactonate as the sole carbon source. In vitro, can also use L-gulonate. This chain is L-galactonate-5-dehydrogenase (lgoD), found in Escherichia coli (strain K12).